We begin with the raw amino-acid sequence, 644 residues long: MSRQFSSRSGYRSGGGFSSGSAGIINYQRRTTSSSTRRSGGGGGRFSSCGGGGGSFGAGGGFGSRSLVNLGGSKSISISVARGGGRGSGFGGGYGGGGFGGGGFGGGGFGGGGIGGGGFGGFGSGGGGFGGGGFGGGGYGGGYGPVCPPGGIQEVTINQSLLQPLNVEIDPEIQKVKSREREQIKSLNNQFASFIDKVRFLEQQNQVLQTKWELLQQVDTSTRTHNLEPYFESFINNLRRRVDQLKSDQSRLDSELKNMQDMVEDYRNKYEDEINKRTNAENEFVTIKKDVDGAYMTKVDLQAKLDNLQQEIDFLTALYQAELSQMQTQISETNVILSMDNNRSLDLDSIIAEVKAQYEDIAQKSKAEAESLYQSKYEELQITAGRHGDSVRNSKIEISELNRVIQRLRSEIDNVKKQISNLQQSISDAEQRGENALKDAKNKLNDLEDALQQAKEDLARLLRDYQELMNTKLALDLEIATYRTLLEGEESRMSGECAPNVSVSVSTSHTTISGGGSRGGGGGGYGSGGSSYGSGGGSYGSGGGGGGGRGSYGSGGSSYGSGGGSYGSGGGGGGHGSYGSGSSSGGYRGGSGGGGGGSSGGRGSGGGSSGGSIGGRGSSSGGVKSSGGSSSVKFVSTTYSGVTR.

The tract at residues Ser-2–Arg-179 is head. Arg-12 carries the omega-N-methylarginine modification. Phosphoserine occurs at positions 18 and 21. A compositionally biased stretch (low complexity) spans Ala-22–Arg-38. The disordered stretch occupies residues Ala-22 to Ser-47. Arg-45 is modified (omega-N-methylarginine). The residue at position 66 (Ser-66) is a Phosphoserine. The residue at position 82 (Arg-82) is an Omega-N-methylarginine. The interval Glu-180–Leu-215 is coil 1A. An IF rod domain is found at Glu-180–Met-493. The linker 1 stretch occupies residues Gln-216–Phe-234. Residues Ile-235–Met-326 form a coil 1B region. An N6,N6-dimethyllysine modification is found at Lys-276. The linker 12 stretch occupies residues Gln-327–Ile-350. The residue at position 344 (Ser-344) is a Phosphoserine. The interval Ile-351–Glu-489 is coil 2. Disordered stretches follow at residues Glu-489–Gly-523 and Ser-568–Arg-644. A tail region spans residues Glu-490–Arg-644. Over residues Val-501–Thr-511 the composition is skewed to low complexity. Gly residues-rich tracts occupy residues Ser-513 to Gly-523 and Ser-568 to Ser-620. Arg-518 and Arg-588 each carry omega-N-methylarginine. Residues Gly-621–Ser-631 are compositionally biased toward low complexity. A compositionally biased stretch (polar residues) spans Val-632–Arg-644.

The protein belongs to the intermediate filament family. As to quaternary structure, heterotetramer of two type I and two type II keratins. Heterodimer with KRT10. Two heterodimers of KRT1 and KRT10 form a heterotetramer. Forms a heterodimer with KRT14; the interaction is more abundant in the absence of KRT5. Interacts with PLEC isoform 1C, when in a heterodimer with KRT10. Interacts with ITGB1 in the presence of RACK1 and SRC, and with RACK1. Interacts with C1QBP; the association represents a cell surface kininogen receptor. Interacts with EPPK1; interaction is dependent of higher-order structure of intermediate filament. Undergoes deimination of some arginine residues (citrullination). The source of this protein is neonatal foreskin. The 67-kDa type II keratins are expressed in terminally differentiating epidermis.

Its subcellular location is the cell membrane. The protein resides in the cytoplasm. In terms of biological role, may regulate the activity of kinases such as PKC and SRC via binding to integrin beta-1 (ITB1) and the receptor of activated protein C kinase 1 (RACK1). In complex with C1QBP is a high affinity receptor for kininogen-1/HMWK. This chain is Keratin, type II cytoskeletal 1 (KRT1), found in Homo sapiens (Human).